A 151-amino-acid chain; its full sequence is Ribonuclease H (151 aa).

Positions 1–146 (MPDLYAYTDG…ADELARAGMA (146 aa)) constitute an RNase H type-1 domain. The Mg(2+) site is built by D9, E52, D74, and D138.

Belongs to the RNase H family. As to quaternary structure, monomer. The cofactor is Mg(2+).

It is found in the cytoplasm. The enzyme catalyses Endonucleolytic cleavage to 5'-phosphomonoester.. Functionally, endonuclease that specifically degrades the RNA of RNA-DNA hybrids. In Cereibacter sphaeroides (strain ATCC 17029 / ATH 2.4.9) (Rhodobacter sphaeroides), this protein is Ribonuclease H.